The following is a 177-amino-acid chain: Large ribosomal subunit protein uL10 (177 aa).

This sequence belongs to the universal ribosomal protein uL10 family. Part of the ribosomal stalk of the 50S ribosomal subunit. The N-terminus interacts with L11 and the large rRNA to form the base of the stalk. The C-terminus forms an elongated spine to which L12 dimers bind in a sequential fashion forming a multimeric L10(L12)X complex.

Functionally, forms part of the ribosomal stalk, playing a central role in the interaction of the ribosome with GTP-bound translation factors. This chain is Large ribosomal subunit protein uL10, found in Leptospira borgpetersenii serovar Hardjo-bovis (strain JB197).